The sequence spans 130 residues: Small ribosomal subunit protein uS9 (130 aa).

Belongs to the universal ribosomal protein uS9 family.

The chain is Small ribosomal subunit protein uS9 (rpsI) from Geobacillus stearothermophilus (Bacillus stearothermophilus).